The chain runs to 362 residues: Glutamate 5-kinase (362 aa).

Residue K3 participates in ATP binding. The substrate site is built by S43, D128, and N140. Residues 160-161 and 202-208 contribute to the ATP site; these read TD and TGGMRTK. Residues 267–348 enclose the PUA domain; the sequence is AGAILIDDGA…REIENVLGYS (82 aa).

It belongs to the glutamate 5-kinase family.

Its subcellular location is the cytoplasm. It catalyses the reaction L-glutamate + ATP = L-glutamyl 5-phosphate + ADP. It functions in the pathway amino-acid biosynthesis; L-proline biosynthesis; L-glutamate 5-semialdehyde from L-glutamate: step 1/2. Catalyzes the transfer of a phosphate group to glutamate to form L-glutamate 5-phosphate. The protein is Glutamate 5-kinase of Xanthomonas euvesicatoria pv. vesicatoria (strain 85-10) (Xanthomonas campestris pv. vesicatoria).